The chain runs to 360 residues: F-box protein SKP2B (360 aa).

In terms of domain architecture, F-box spans 25-76; sequence ISEWKDIPVELLMKILNLVDDRTVIIASCICSGWRDAVSLGLTRLSLSWCKK. LRR repeat units lie at residues 77–99, 101–126, 127–152, 153–178, 180–205, 206–231, 232–257, 258–301, and 302–333; these read NMNS…VLRQ, KPQL…DLSK, SSKI…NLSG, CTSF…NLCG, VEAV…NLGW, CENI…DLCS, CVLI…GLYY, CRNI…NISQ, and CTYL…VMSG.

In terms of biological role, component of SCF(SKP2B) E3 ubiquitin ligase complexes, which mediate the ubiquitination and subsequent proteasomal degradation of the cyclin-dependent kinase inhibitor KRP1. Does not interact with auxin. The protein is F-box protein SKP2B (SKP2B) of Arabidopsis thaliana (Mouse-ear cress).